We begin with the raw amino-acid sequence, 69 residues long: DNA-directed RNA polymerase subunit omega (69 aa).

It belongs to the RNA polymerase subunit omega family. In terms of assembly, the RNAP catalytic core consists of 2 alpha, 1 beta, 1 beta' and 1 omega subunit. When a sigma factor is associated with the core the holoenzyme is formed, which can initiate transcription.

It catalyses the reaction RNA(n) + a ribonucleoside 5'-triphosphate = RNA(n+1) + diphosphate. Its function is as follows. Promotes RNA polymerase assembly. Latches the N- and C-terminal regions of the beta' subunit thereby facilitating its interaction with the beta and alpha subunits. This Symbiobacterium thermophilum (strain DSM 24528 / JCM 14929 / IAM 14863 / T) protein is DNA-directed RNA polymerase subunit omega.